The primary structure comprises 228 residues: Chromatin remodeling protein SHL (228 aa).

One can recognise a BAH domain in the interval 21–137; sequence KSIQEGDAVL…STTGAFDPDR (117 aa). Residues 139-190 form a PHD-type zinc finger; that stretch reads TVFCKCEMPYNPDDLMVQCEECSEWFHPSCIGTTIEEAKKPDNFYCEECSPQ. The segment covering 191-203 has biased composition (polar residues); sequence QQNLHNSNSTSNN. A disordered region spans residues 191 to 228; the sequence is QQNLHNSNSTSNNRDAKVNGKRSLEVTKSKNKHTKRPG. Residues 204-218 are compositionally biased toward basic and acidic residues; sequence RDAKVNGKRSLEVTK. The Nuclear localization signal motif lies at 210-217; sequence GKRSLEVT. Positions 219-228 are enriched in basic residues; that stretch reads SKNKHTKRPG.

The protein belongs to the SHL1/EBS protein family. Recognizes di- and trimethylated histone H3 at lysine 4. Interacts with HDA6. Interacts with DEK3. Expressed ubiquitously. Mostly expressed in roots, stems, leaves and flowers, and, to a lower extent, in siliques.

Its subcellular location is the nucleus. Chromatin remodeling factor that binds to methylated histone (e.g. H3K4me2/3) to prevent their acetylation (e.g. H3K9K14Ac), likely by recruiting histone deacetylase (HDAC) complexes, and thus regulate the transcription of target genes. Required during development and for fertility, probably by modulating developmental gene expression. Promotes development speed, but at fitness cost. Involved in the chromatin-mediated repression of floral initiation and controls genes regulating flowering. Negatively regulates the expression of the floral integrator SOC1, by preventing high levels of H3 acetylation, thus maintaining an inactive chromatin conformation. This Arabidopsis thaliana (Mouse-ear cress) protein is Chromatin remodeling protein SHL.